The chain runs to 155 residues: Small ribosomal subunit protein uS7 (155 aa).

Belongs to the universal ribosomal protein uS7 family. Part of the 30S ribosomal subunit. Contacts proteins S9 and S11.

Functionally, one of the primary rRNA binding proteins, it binds directly to 16S rRNA where it nucleates assembly of the head domain of the 30S subunit. Is located at the subunit interface close to the decoding center, probably blocks exit of the E-site tRNA. In Mycoplasma pneumoniae (strain ATCC 29342 / M129 / Subtype 1) (Mycoplasmoides pneumoniae), this protein is Small ribosomal subunit protein uS7.